The following is a 346-amino-acid chain: Selenide, water dikinase (346 aa).

Selenocysteine 16 is a catalytic residue. Residue selenocysteine 16 is a non-standard amino acid, selenocysteine. ATP contacts are provided by residues lysine 19 and 47–49 (TAD). Aspartate 50 contributes to the Mg(2+) binding site. ATP is bound by residues aspartate 67, aspartate 90, and 138–140 (GHS). Position 90 (aspartate 90) interacts with Mg(2+). Position 226 (aspartate 226) interacts with Mg(2+).

It belongs to the selenophosphate synthase 1 family. Class I subfamily. In terms of assembly, homodimer. It depends on Mg(2+) as a cofactor.

The enzyme catalyses hydrogenselenide + ATP + H2O = selenophosphate + AMP + phosphate + 2 H(+). Its function is as follows. Synthesizes selenophosphate from selenide and ATP. This Haemophilus ducreyi (strain 35000HP / ATCC 700724) protein is Selenide, water dikinase.